A 375-amino-acid polypeptide reads, in one-letter code: MTGDTSARKLEHLKMIVSSKVESRESTLLEYVRIVHNPTPEVNLGDVSLEIDFCGGRLRAPLVITGMTGGHPDVEWINRELASVAEELGIAIGVGSQRAAIEDPSLARTFRAAREAAPNAFLIANLGAPQLSLGYSVREVRMAVEMIDADAIAIHLNPGQEAYQPEGDPFYRGVVGKIAEAAEAAGVPVIVKETGNGLSREAVAQLRALGVRCFDVAGLGGTNWIKIEVLRGRKAGSPLEAGPLQDFWGNPTAAALMEARTAAPDAYIIASGGVRNGLDAARAIALGADAAGVALPAIRSLLSGGRQATLKLLKAIEYQLKTAVYMVGETRVRGLWRAPIVVWGRLAEEAEARGIDPRWYTNTLRLEALVYKDVK.

Residue 8-9 participates in substrate binding; it reads RK. Residues Thr65, 66-68, Ser96, and Asn125 contribute to the FMN site; that span reads GMT. 96–98 is a binding site for substrate; that stretch reads SQR. Gln160 contacts substrate. Glu161 provides a ligand contact to Mg(2+). FMN is bound by residues Lys192, Thr222, 273-275, and 294-295; these read GVR and AL.

Belongs to the IPP isomerase type 2 family. As to quaternary structure, homooctamer. Dimer of tetramers. FMN serves as cofactor. It depends on NADPH as a cofactor. Requires Mg(2+) as cofactor.

The protein localises to the cytoplasm. It catalyses the reaction isopentenyl diphosphate = dimethylallyl diphosphate. Involved in the biosynthesis of isoprenoids. Catalyzes the 1,3-allylic rearrangement of the homoallylic substrate isopentenyl (IPP) to its allylic isomer, dimethylallyl diphosphate (DMAPP). This chain is Isopentenyl-diphosphate delta-isomerase, found in Aeropyrum pernix (strain ATCC 700893 / DSM 11879 / JCM 9820 / NBRC 100138 / K1).